We begin with the raw amino-acid sequence, 679 residues long: Transmembrane protein 214-B (679 aa).

The tract at residues 1–94 is disordered; sequence MASGAPDGKW…KKKPQSGDSV (94 aa). Positions 18–30 are enriched in basic and acidic residues; the sequence is KSGERREGERKAL. Residues asparagine 70, asparagine 298, and asparagine 322 are each glycosylated (N-linked (GlcNAc...) asparagine). 2 helical membrane passes run 468–488 and 606–626; these read GGFPWWRLIVIAFVFLFGSVL and LLLHLHQTYLLPAVTYLEAAV.

Belongs to the TMEM214 family. As to quaternary structure, constitutively interacts with CASP4; required for the localization of procaspase 4 to the ER.

The protein localises to the endoplasmic reticulum membrane. Its function is as follows. Critical mediator, in cooperation with CASP4, of endoplasmic reticulum-stress induced apoptosis. Required or the activation of CASP4 following endoplasmic reticulum stress. The chain is Transmembrane protein 214-B (tmem214-b) from Xenopus laevis (African clawed frog).